We begin with the raw amino-acid sequence, 141 residues long: Large ribosomal subunit protein uL11 (141 aa).

This sequence belongs to the universal ribosomal protein uL11 family. In terms of assembly, part of the ribosomal stalk of the 50S ribosomal subunit. Interacts with L10 and the large rRNA to form the base of the stalk. L10 forms an elongated spine to which L12 dimers bind in a sequential fashion forming a multimeric L10(L12)X complex. In terms of processing, one or more lysine residues are methylated.

Functionally, forms part of the ribosomal stalk which helps the ribosome interact with GTP-bound translation factors. The protein is Large ribosomal subunit protein uL11 of Brevibacillus brevis (strain 47 / JCM 6285 / NBRC 100599).